The sequence spans 262 residues: Phosphatidylserine decarboxylase proenzyme (262 aa).

Active-site charge relay system; for autoendoproteolytic cleavage activity residues include D86, H142, and S226. The Schiff-base intermediate with substrate; via pyruvic acid; for decarboxylase activity role is filled by S226. S226 bears the Pyruvic acid (Ser); by autocatalysis mark.

It belongs to the phosphatidylserine decarboxylase family. PSD-B subfamily. Prokaryotic type I sub-subfamily. As to quaternary structure, heterodimer of a large membrane-associated beta subunit and a small pyruvoyl-containing alpha subunit. Pyruvate serves as cofactor. In terms of processing, is synthesized initially as an inactive proenzyme. Formation of the active enzyme involves a self-maturation process in which the active site pyruvoyl group is generated from an internal serine residue via an autocatalytic post-translational modification. Two non-identical subunits are generated from the proenzyme in this reaction, and the pyruvate is formed at the N-terminus of the alpha chain, which is derived from the carboxyl end of the proenzyme. The autoendoproteolytic cleavage occurs by a canonical serine protease mechanism, in which the side chain hydroxyl group of the serine supplies its oxygen atom to form the C-terminus of the beta chain, while the remainder of the serine residue undergoes an oxidative deamination to produce ammonia and the pyruvoyl prosthetic group on the alpha chain. During this reaction, the Ser that is part of the protease active site of the proenzyme becomes the pyruvoyl prosthetic group, which constitutes an essential element of the active site of the mature decarboxylase.

The protein resides in the cell membrane. It carries out the reaction a 1,2-diacyl-sn-glycero-3-phospho-L-serine + H(+) = a 1,2-diacyl-sn-glycero-3-phosphoethanolamine + CO2. The protein operates within phospholipid metabolism; phosphatidylethanolamine biosynthesis; phosphatidylethanolamine from CDP-diacylglycerol: step 2/2. Catalyzes the formation of phosphatidylethanolamine (PtdEtn) from phosphatidylserine (PtdSer). The polypeptide is Phosphatidylserine decarboxylase proenzyme (Bacillus cereus (strain B4264)).